Consider the following 501-residue polypeptide: Glycerol kinase (501 aa).

Position 11 (T11) interacts with ADP. ATP-binding residues include T11, T12, and S13. T11 contributes to the sn-glycerol 3-phosphate binding site. R15 provides a ligand contact to ADP. The sn-glycerol 3-phosphate site is built by R81, E82, Y133, and D242. Glycerol is bound by residues R81, E82, Y133, D242, and Q243. Positions 264 and 307 each coordinate ADP. Residues T264, G307, Q311, and G409 each contribute to the ATP site. Positions 409 and 413 each coordinate ADP.

Belongs to the FGGY kinase family.

It carries out the reaction glycerol + ATP = sn-glycerol 3-phosphate + ADP + H(+). Its pathway is polyol metabolism; glycerol degradation via glycerol kinase pathway; sn-glycerol 3-phosphate from glycerol: step 1/1. Inhibited by fructose 1,6-bisphosphate (FBP). Its function is as follows. Key enzyme in the regulation of glycerol uptake and metabolism. Catalyzes the phosphorylation of glycerol to yield sn-glycerol 3-phosphate. This Borreliella afzelii (strain PKo) (Borrelia afzelii) protein is Glycerol kinase.